The following is a 346-amino-acid chain: Histidinol-phosphate aminotransferase (346 aa).

At Lys206 the chain carries N6-(pyridoxal phosphate)lysine.

It belongs to the class-II pyridoxal-phosphate-dependent aminotransferase family. Histidinol-phosphate aminotransferase subfamily. As to quaternary structure, homodimer. It depends on pyridoxal 5'-phosphate as a cofactor.

The catalysed reaction is L-histidinol phosphate + 2-oxoglutarate = 3-(imidazol-4-yl)-2-oxopropyl phosphate + L-glutamate. It participates in amino-acid biosynthesis; L-histidine biosynthesis; L-histidine from 5-phospho-alpha-D-ribose 1-diphosphate: step 7/9. This Bacteroides thetaiotaomicron (strain ATCC 29148 / DSM 2079 / JCM 5827 / CCUG 10774 / NCTC 10582 / VPI-5482 / E50) protein is Histidinol-phosphate aminotransferase.